We begin with the raw amino-acid sequence, 250 residues long: U6 snRNA phosphodiesterase 1 (250 aa).

A disordered region spans residues 1–31; the sequence is MALVSYSSSEEDEGETSEPPGRRLPPLPPPT. Positions 22–31 are enriched in pro residues; sequence RRLPPLPPPT. Catalysis depends on His-105, which acts as the Proton acceptor. 105 to 107 lines the AMP pocket; that stretch reads HIS. UMP-binding positions include Gln-149, Tyr-187, and 191 to 195; that span reads SFHVS. AMP-binding positions include Tyr-187 and 189–195; that span reads EPSFHVS. The active-site Proton donor is His-193.

Belongs to the 2H phosphoesterase superfamily. USB1 family.

It is found in the nucleus. It carries out the reaction a 3'-end uridylyl-uridine-RNA = a 3'-end 2',3'-cyclophospho-uridine-RNA + uridine. The catalysed reaction is a 3'-end uridylyl-adenosine-RNA = a 3'-end 2',3'-cyclophospho-uridine-RNA + adenosine. Its function is as follows. 3'-5' RNA exonuclease that trims the 3' end of oligo(U) and oligo(A) tracts of the pre-U6 small nuclear RNA (snRNA) molecule, leading to the formation of a mature U6 snRNA 3' end-terminated with a 2',3'-cyclic phosphate. Participates in the U6 snRNA 3' end processing that prevents U6 snRNA degradation. In addition also removes uridines from the 3' end of U6atac snRNA and possibly the vault RNA VTRNA1-1. This Xenopus laevis (African clawed frog) protein is U6 snRNA phosphodiesterase 1.